The chain runs to 257 residues: Small ribosomal subunit protein uS3 (257 aa).

A KH type-2 domain is found at 40-110; sequence IRKYLSTKYK…LVSLKVVEVQ (71 aa). Positions 223–257 are disordered; the sequence is ANKEFSRSSKPKKGSFNRSSRSKNTKPAPKQAVSE. Residues 231 to 246 are compositionally biased toward basic residues; it reads SKPKKGSFNRSSRSKN.

The protein belongs to the universal ribosomal protein uS3 family. As to quaternary structure, part of the 30S ribosomal subunit. Forms a tight complex with proteins S10 and S14.

Binds the lower part of the 30S subunit head. Binds mRNA in the 70S ribosome, positioning it for translation. The chain is Small ribosomal subunit protein uS3 from Ureaplasma parvum serovar 3 (strain ATCC 27815 / 27 / NCTC 11736).